Consider the following 124-residue polypeptide: Large ribosomal subunit protein bL17 (124 aa).

Belongs to the bacterial ribosomal protein bL17 family. As to quaternary structure, part of the 50S ribosomal subunit. Contacts protein L32.

This Mycoplasma pneumoniae (strain ATCC 29342 / M129 / Subtype 1) (Mycoplasmoides pneumoniae) protein is Large ribosomal subunit protein bL17.